The primary structure comprises 559 residues: YTH domain-containing family protein 1 (559 aa).

The tract at residues 1 to 49 (MSATSVDPQRTKGQDNKVQNGSLHQKDAVHDNDFEPYLSGQSNPSNSYP) is disordered. The residue at position 2 (Ser2) is an N-acetylserine. Basic and acidic residues predominate over residues 24–33 (HQKDAVHDND). Ser182 carries the phosphoserine modification. Positions 239-365 (SKPAKPQPKM…PTSAPSVESH (127 aa)) are disordered. Composition is skewed to low complexity over residues 279 to 305 (PAPK…AQPL) and 314 to 326 (QPQY…PLQP). The segment covering 343–361 (GANSDSNSVGNAQPTSAPS) has biased composition (polar residues). Positions 389-523 (GRVFIIKSYS…EKAKQVLKII (135 aa)) constitute a YTH domain. RNA is bound by residues 395–397 (KSY), Asp401, 411–412 (WC), Asn441, Trp465, and Trp470.

This sequence belongs to the YTHDF family. YTHDF1 subfamily. As to quaternary structure, interacts with CNOT1; promoting recruitment of the CCR4-NOT complex. Interacts with ribosomes. Interacts with eIF3 (EIF3A or EIF3B). Interacts with YTHDF3. Ubiquitinated by the CUL7-FBXW8 E3 ligase complex leading to degradation. Deubiquitinated and stabilized by USP5 by removing 'Lys-11'-linked polyubiquitination. In terms of tissue distribution, in brain, preferentially expressed in the hippocampus.

The protein resides in the cytoplasm. It is found in the P-body. It localises to the stress granule. Functionally, specifically recognizes and binds N6-methyladenosine (m6A)-containing mRNAs, and regulates their stability. M6A is a modification present at internal sites of mRNAs and some non-coding RNAs and plays a role in mRNA stability and processing. Acts as a regulator of mRNA stability by promoting degradation of m6A-containing mRNAs via interaction with the CCR4-NOT complex. The YTHDF paralogs (YTHDF1, YTHDF2 and YTHDF3) share m6A-containing mRNAs targets and act redundantly to mediate mRNA degradation and cellular differentiation. Required to facilitate learning and memory formation in the hippocampus by binding to m6A-containing neuronal mRNAs. Acts as a regulator of axon guidance by binding to m6A-containing ROBO3 transcripts. Acts as a negative regulator of antigen cross-presentation in myeloid dendritic cells. In the context of tumorigenesis, negative regulation of antigen cross-presentation limits the anti-tumor response by reducing efficiency of tumor-antigen cross-presentation. Promotes formation of phase-separated membraneless compartments, such as P-bodies or stress granules, by undergoing liquid-liquid phase separation upon binding to mRNAs containing multiple m6A-modified residues: polymethylated mRNAs act as a multivalent scaffold for the binding of YTHDF proteins, juxtaposing their disordered regions and thereby leading to phase separation. The resulting mRNA-YTHDF complexes then partition into different endogenous phase-separated membraneless compartments, such as P-bodies, stress granules or neuronal RNA granules. This is YTH domain-containing family protein 1 from Mus musculus (Mouse).